We begin with the raw amino-acid sequence, 330 residues long: Methionine import ATP-binding protein MetN (330 aa).

The 240-residue stretch at 2–241 (IAFRGVSKVY…PSTRLHQLCF (240 aa)) folds into the ABC transporter domain. 38–45 (GQSGAGKS) is a binding site for ATP.

It belongs to the ABC transporter superfamily. Methionine importer (TC 3.A.1.24) family. The complex is composed of two ATP-binding proteins (MetN), two transmembrane proteins (MetI) and a solute-binding protein (MetQ).

The protein resides in the cell inner membrane. The catalysed reaction is L-methionine(out) + ATP + H2O = L-methionine(in) + ADP + phosphate + H(+). It carries out the reaction D-methionine(out) + ATP + H2O = D-methionine(in) + ADP + phosphate + H(+). Functionally, part of the ABC transporter complex MetNIQ involved in methionine import. Responsible for energy coupling to the transport system. The sequence is that of Methionine import ATP-binding protein MetN from Myxococcus xanthus (strain DK1622).